A 409-amino-acid chain; its full sequence is SPI-1 type 3 secretion system translocon protein SctB (409 aa).

A helical membrane pass occupies residues 119–140 (ISGMSSSAVALLAAANTLMLTL). Residues 350 to 368 (ERSEQQISQVNNRVASTAS) are compositionally biased toward polar residues. Residues 350 to 378 (ERSEQQISQVNNRVASTASDEARESSRKS) are disordered.

Belongs to the SctB/SipC family. In terms of assembly, the core secretion machinery of the T3SS is composed of approximately 20 different proteins, including cytoplasmic components, a base, an export apparatus and a needle. This subunit is involved in the formation of a pore, called the translocon, in host membrane.

Its subcellular location is the secreted. The protein localises to the host membrane. Component of the type III secretion system 1 (SPI-1 T3SS), also called injectisome, which is used to inject bacterial effector proteins into eukaryotic host cells. SipB/SctE1 and SipC/SctB1 are inserted into the host membrane where they form a pore and allow the translocation of effector proteins into the cytosol of target cells. In Salmonella typhi, this protein is SPI-1 type 3 secretion system translocon protein SctB.